Reading from the N-terminus, the 190-residue chain is Endoribonuclease YbeY (190 aa).

The segment at 1–20 (MDVENDRPPRRGAAGERNSG) is disordered. Histidine 147, histidine 151, and histidine 157 together coordinate Zn(2+).

Belongs to the endoribonuclease YbeY family. Requires Zn(2+) as cofactor.

It localises to the cytoplasm. Functionally, single strand-specific metallo-endoribonuclease involved in late-stage 70S ribosome quality control and in maturation of the 3' terminus of the 16S rRNA. The sequence is that of Endoribonuclease YbeY from Nitrobacter hamburgensis (strain DSM 10229 / NCIMB 13809 / X14).